The chain runs to 156 residues: Ribosomal RNA large subunit methyltransferase H (156 aa).

Residues Leu73, Gly104, and 123 to 128 each bind S-adenosyl-L-methionine; that span reads LSPLTL.

It belongs to the RNA methyltransferase RlmH family. As to quaternary structure, homodimer.

The protein resides in the cytoplasm. It carries out the reaction pseudouridine(1915) in 23S rRNA + S-adenosyl-L-methionine = N(3)-methylpseudouridine(1915) in 23S rRNA + S-adenosyl-L-homocysteine + H(+). Specifically methylates the pseudouridine at position 1915 (m3Psi1915) in 23S rRNA. This Aliivibrio fischeri (strain ATCC 700601 / ES114) (Vibrio fischeri) protein is Ribosomal RNA large subunit methyltransferase H.